We begin with the raw amino-acid sequence, 546 residues long: Chaperonin GroEL (546 aa).

Residues Thr29 to Pro32, Lys50, Asp86 to Thr90, Gly414, and Asp492 contribute to the ATP site.

The protein belongs to the chaperonin (HSP60) family. As to quaternary structure, forms a cylinder of 14 subunits composed of two heptameric rings stacked back-to-back. Interacts with the co-chaperonin GroES.

The protein resides in the cytoplasm. It catalyses the reaction ATP + H2O + a folded polypeptide = ADP + phosphate + an unfolded polypeptide.. Its function is as follows. Together with its co-chaperonin GroES, plays an essential role in assisting protein folding. The GroEL-GroES system forms a nano-cage that allows encapsulation of the non-native substrate proteins and provides a physical environment optimized to promote and accelerate protein folding. The protein is Chaperonin GroEL of Helicobacter pylori (strain J99 / ATCC 700824) (Campylobacter pylori J99).